Consider the following 152-residue polypeptide: Nucleoside diphosphate kinase A 1 (152 aa).

ATP-binding residues include Lys12, Phe60, Arg88, Thr94, Arg105, and Asn115. His118 acts as the Pros-phosphohistidine intermediate in catalysis.

This sequence belongs to the NDK family. In terms of assembly, homohexamer. The cofactor is Mg(2+). The N-terminus is blocked.

The protein resides in the cytoplasm. Its subcellular location is the cell membrane. It is found in the nucleus. The enzyme catalyses a 2'-deoxyribonucleoside 5'-diphosphate + ATP = a 2'-deoxyribonucleoside 5'-triphosphate + ADP. It catalyses the reaction a ribonucleoside 5'-diphosphate + ATP = a ribonucleoside 5'-triphosphate + ADP. With respect to regulation, autophosphorylation at His-118 increases serine/threonine protein kinase activity of the enzyme. Interaction with the SET complex inhibits exonuclease activity. In terms of biological role, major role in the synthesis of nucleoside triphosphates other than ATP. Possesses nucleoside-diphosphate kinase, serine/threonine-specific protein kinase, geranyl and farnesyl pyrophosphate kinase, histidine protein kinase and 3'-5' exonuclease activities. Involved in cell proliferation, differentiation and development, signal transduction, G protein-coupled receptor endocytosis, and gene expression. Required for neural development including neural patterning and cell fate determination. This chain is Nucleoside diphosphate kinase A 1 (NME1-1), found in Bos taurus (Bovine).